The following is a 443-amino-acid chain: ATP-dependent protease ATPase subunit HslU (443 aa).

ATP contacts are provided by residues I18 and 60-65 (GVGKTE). Residues 138–158 (PAENQWGEKEQNEDKGTRQTF) form a disordered region. The span at 143 to 154 (WGEKEQNEDKGT) shows a compositional bias: basic and acidic residues. ATP is bound by residues D255, E321, and R393.

This sequence belongs to the ClpX chaperone family. HslU subfamily. A double ring-shaped homohexamer of HslV is capped on each side by a ring-shaped HslU homohexamer. The assembly of the HslU/HslV complex is dependent on binding of ATP.

It is found in the cytoplasm. Functionally, ATPase subunit of a proteasome-like degradation complex; this subunit has chaperone activity. The binding of ATP and its subsequent hydrolysis by HslU are essential for unfolding of protein substrates subsequently hydrolyzed by HslV. HslU recognizes the N-terminal part of its protein substrates and unfolds these before they are guided to HslV for hydrolysis. In Pseudoalteromonas atlantica (strain T6c / ATCC BAA-1087), this protein is ATP-dependent protease ATPase subunit HslU.